A 78-amino-acid polypeptide reads, in one-letter code: HLFVPGPVNIPDQVLRTLLEDVKKLASRLRSDSQHTIKLLDAYRVFFDWKDYLKKVFRNVNTLLKDLGYPVKPLIPSR.

This sequence belongs to the class-V pyridoxal-phosphate-dependent aminotransferase family. As to quaternary structure, homodimer. It depends on pyridoxal 5'-phosphate as a cofactor. In terms of tissue distribution, expressed in leaves but not in root tissue or seedlings.

The protein localises to the peroxisome. It catalyses the reaction glyoxylate + L-serine = 3-hydroxypyruvate + glycine. It carries out the reaction glyoxylate + L-alanine = glycine + pyruvate. With respect to regulation, inhibited by aminooxyacetate. This chain is Serine--glyoxylate aminotransferase, found in Triticum aestivum (Wheat).